The primary structure comprises 498 residues: ATP synthase subunit beta, chloroplastic (498 aa).

Residue 172 to 179 (GGAGVGKT) participates in ATP binding.

Belongs to the ATPase alpha/beta chains family. As to quaternary structure, F-type ATPases have 2 components, CF(1) - the catalytic core - and CF(0) - the membrane proton channel. CF(1) has five subunits: alpha(3), beta(3), gamma(1), delta(1), epsilon(1). CF(0) has four main subunits: a(1), b(1), b'(1) and c(9-12).

The protein resides in the plastid. It is found in the chloroplast thylakoid membrane. It carries out the reaction ATP + H2O + 4 H(+)(in) = ADP + phosphate + 5 H(+)(out). Produces ATP from ADP in the presence of a proton gradient across the membrane. The catalytic sites are hosted primarily by the beta subunits. This Jasminum nudiflorum (Winter jasmine) protein is ATP synthase subunit beta, chloroplastic.